An 81-amino-acid chain; its full sequence is Photosystem I iron-sulfur center (81 aa).

4Fe-4S ferredoxin-type domains are found at residues 2-31 (SHAV…MVPW) and 39-68 (IASA…VRVY). Residues Cys-11, Cys-14, Cys-17, Cys-21, Cys-48, Cys-51, Cys-54, and Cys-58 each coordinate [4Fe-4S] cluster.

The eukaryotic PSI reaction center is composed of at least 11 subunits. It depends on [4Fe-4S] cluster as a cofactor.

It is found in the plastid. It localises to the chloroplast thylakoid membrane. It catalyses the reaction reduced [plastocyanin] + hnu + oxidized [2Fe-2S]-[ferredoxin] = oxidized [plastocyanin] + reduced [2Fe-2S]-[ferredoxin]. Functionally, apoprotein for the two 4Fe-4S centers FA and FB of photosystem I (PSI); essential for photochemical activity. FB is the terminal electron acceptor of PSI, donating electrons to ferredoxin. The C-terminus interacts with PsaA/B/D and helps assemble the protein into the PSI complex. Required for binding of PsaD and PsaE to PSI. PSI is a plastocyanin/cytochrome c6-ferredoxin oxidoreductase, converting photonic excitation into a charge separation, which transfers an electron from the donor P700 chlorophyll pair to the spectroscopically characterized acceptors A0, A1, FX, FA and FB in turn. The polypeptide is Photosystem I iron-sulfur center (Ostreococcus tauri).